Reading from the N-terminus, the 178-residue chain is Large ribosomal subunit protein uL10 (178 aa).

It belongs to the universal ribosomal protein uL10 family. As to quaternary structure, part of the ribosomal stalk of the 50S ribosomal subunit. The N-terminus interacts with L11 and the large rRNA to form the base of the stalk. The C-terminus forms an elongated spine to which L12 dimers bind in a sequential fashion forming a multimeric L10(L12)X complex.

In terms of biological role, forms part of the ribosomal stalk, playing a central role in the interaction of the ribosome with GTP-bound translation factors. The sequence is that of Large ribosomal subunit protein uL10 from Petrotoga mobilis (strain DSM 10674 / SJ95).